The primary structure comprises 154 residues: Ribonuclease H (154 aa).

An RNase H type-1 domain is found at 1–142 (MRKQIEIFTD…CDELAKQGAE (142 aa)). Residues aspartate 10, glutamate 48, aspartate 70, and aspartate 134 each coordinate Mg(2+).

Belongs to the RNase H family. As to quaternary structure, monomer. It depends on Mg(2+) as a cofactor.

Its subcellular location is the cytoplasm. It catalyses the reaction Endonucleolytic cleavage to 5'-phosphomonoester.. Functionally, endonuclease that specifically degrades the RNA of RNA-DNA hybrids. This chain is Ribonuclease H, found in Actinobacillus succinogenes (strain ATCC 55618 / DSM 22257 / CCUG 43843 / 130Z).